A 705-amino-acid chain; its full sequence is Tryptophan synthase (705 aa).

A tryptophan synthase alpha chain region spans residues 1-293 (MEAIKKVFEQ…QLTPNAETAK (293 aa)). Active-site proton acceptor residues include Glu49 and Asp60. Residues 266 to 287 (KGEPSRVRSPGAAQRTPSQLTP) are disordered. The tryptophan synthase beta chain stretch occupies residues 294 to 705 (GVENILPARF…HVSSNAIPSK (412 aa)). An N6-(pyridoxal phosphate)lysine modification is found at Lys381.

It in the N-terminal section; belongs to the TrpA family. The protein in the C-terminal section; belongs to the TrpB family. Pyridoxal 5'-phosphate is required as a cofactor.

It carries out the reaction (1S,2R)-1-C-(indol-3-yl)glycerol 3-phosphate + L-serine = D-glyceraldehyde 3-phosphate + L-tryptophan + H2O. It participates in amino-acid biosynthesis; L-tryptophan biosynthesis; L-tryptophan from chorismate: step 5/5. This is Tryptophan synthase (TRP-1) from Coprinopsis cinerea (Inky cap fungus).